The sequence spans 269 residues: Thiazole synthase (269 aa).

K95 serves as the catalytic Schiff-base intermediate with DXP. 1-deoxy-D-xylulose 5-phosphate-binding positions include G156, 182-183 (AG), and 204-205 (NT).

Belongs to the ThiG family. Homotetramer. Forms heterodimers with either ThiH or ThiS.

The protein localises to the cytoplasm. It carries out the reaction [ThiS sulfur-carrier protein]-C-terminal-Gly-aminoethanethioate + 2-iminoacetate + 1-deoxy-D-xylulose 5-phosphate = [ThiS sulfur-carrier protein]-C-terminal Gly-Gly + 2-[(2R,5Z)-2-carboxy-4-methylthiazol-5(2H)-ylidene]ethyl phosphate + 2 H2O + H(+). It participates in cofactor biosynthesis; thiamine diphosphate biosynthesis. In terms of biological role, catalyzes the rearrangement of 1-deoxy-D-xylulose 5-phosphate (DXP) to produce the thiazole phosphate moiety of thiamine. Sulfur is provided by the thiocarboxylate moiety of the carrier protein ThiS. In vitro, sulfur can be provided by H(2)S. The chain is Thiazole synthase from Shewanella frigidimarina (strain NCIMB 400).